The chain runs to 273 residues: Large ribosomal subunit protein uL2 (273 aa).

The interval 228–273 (VDHPHGGGEGKTSGGRHPVTPWGFPTKGKKTRKNKRTSKFIVKKRK) is disordered. Over residues 254–273 (KGKKTRKNKRTSKFIVKKRK) the composition is skewed to basic residues.

The protein belongs to the universal ribosomal protein uL2 family. In terms of assembly, part of the 50S ribosomal subunit. Forms a bridge to the 30S subunit in the 70S ribosome.

Functionally, one of the primary rRNA binding proteins. Required for association of the 30S and 50S subunits to form the 70S ribosome, for tRNA binding and peptide bond formation. It has been suggested to have peptidyltransferase activity; this is somewhat controversial. Makes several contacts with the 16S rRNA in the 70S ribosome. This chain is Large ribosomal subunit protein uL2, found in Rickettsia rickettsii (strain Iowa).